The sequence spans 605 residues: Methyl-CpG-binding domain protein 1 (605 aa).

Residues 1–69 form the MBD domain; it reads MAEDWLDCPA…TLFDFKQGIL (69 aa). The disordered stretch occupies residues 80 to 123; the sequence is AVASKKRKKPSRPAKTRKRQVGPQSGEVRKEAPRDETKADTDTA. The segment covering 83 to 99 has biased composition (basic residues); that stretch reads SKKRKKPSRPAKTRKRQ. The short motif at 84–88 is the Nuclear localization signal element; sequence KKRKK. Over residues 106–120 the composition is skewed to basic and acidic residues; that stretch reads EVRKEAPRDETKADT. Lys-117 is covalently cross-linked (Glycyl lysine isopeptide (Lys-Gly) (interchain with G-Cter in SUMO2)). 2 consecutive CXXC-type zinc fingers follow at residues 169–216 and 217–263; these read RMFK…RRCL and RIVE…RRCL. Residues Cys-176, Cys-179, Cys-182, Cys-188, Cys-191, Cys-194, Cys-210, Cys-215, Cys-225, Cys-228, Cys-231, Cys-237, Cys-240, Cys-243, Cys-257, and Cys-262 each coordinate Zn(2+). A disordered region spans residues 269–308; it reads RRKGGCDSKMAARRRPGAQPLPPPPPSQSPEPTEPHPRAL. A Glycyl lysine isopeptide (Lys-Gly) (interchain with G-Cter in SUMO2) cross-link involves residue Lys-277. Residues 287–297 are compositionally biased toward pro residues; that stretch reads QPLPPPPPSQS. Ser-297 is modified (phosphoserine). A CXXC-type 3 zinc finger spans residues 330 to 378; it reads TNRRQNRKCGACAACLRRMDCGRCDFCCDKPKFGGSNQKRQKCRWRQCL. The Zn(2+) site is built by Cys-338, Cys-341, Cys-344, Cys-350, Cys-353, Cys-356, Cys-372, and Cys-377. Residues Ser-391 and Ser-399 each carry the phosphoserine modification. A disordered region spans residues 391-451; that stretch reads SESEDGAGSP…EAGGGFVLPP (61 aa). Over residues 403 to 417 the composition is skewed to basic residues; the sequence is YRRRKRPSSARRHHL. Lys-422 is covalently cross-linked (Glycyl lysine isopeptide (Lys-Gly) (interchain with G-Cter in SUMO2)). The span at 426–439 shows a compositional bias: polar residues; sequence ATRTAQPDHTQAPT. A Glycyl lysine isopeptide (Lys-Gly) (interchain with G-Cter in SUMO2) cross-link involves residue Lys-440. Residues Lys-499 and Lys-538 each participate in a glycyl lysine isopeptide (Lys-Gly) (interchain with G-Cter in SUMO2); alternate cross-link. Residues 520-573 form a disordered region; sequence VLVPGCPSKAVDPGLPSVKQEPPDPEEDKEENKDDSASKLAPEEEAGGAGTPVI. A transcriptional repression domain (TRD) region spans residues 529–592; the sequence is AVDPGLPSVK…RFRDTAVWLP (64 aa). Lys-558 is covalently cross-linked (Glycyl lysine isopeptide (Lys-Gly) (interchain with G-Cter in SUMO2)).

Interacts with OASL, ATF7IP, ATF7IP2 and BAHD1. Binds CHAF1A and the SUV39H1-CBX5 complex via the MBD domain. Binds MGP via the TRD domain. May be part of the MeCP1 complex. Post-translationally, sumoylated, sumoylation may increase interaction with ATF7IP. As to expression, widely expressed.

The protein localises to the nucleus. The protein resides in the nucleus matrix. It localises to the nucleus speckle. Its subcellular location is the chromosome. Transcriptional repressor that binds CpG islands in promoters where the DNA is methylated at position 5 of cytosine within CpG dinucleotides. Binding is abolished by the presence of 7-mG that is produced by DNA damage by methylmethanesulfonate (MMS). Acts as transcriptional repressor and plays a role in gene silencing by recruiting ATF7IP, which in turn recruits factors such as the histone methyltransferase SETDB1. Probably forms a complex with SETDB1 and ATF7IP that represses transcription and couples DNA methylation and histone 'Lys-9' trimethylation. Isoform 1 and isoform 2 can also repress transcription from unmethylated promoters. The chain is Methyl-CpG-binding domain protein 1 from Homo sapiens (Human).